The sequence spans 428 residues: MAKTVAYFYDPDVGNFHYGTGHPMKPHRLSLTHSLVLHYGLYKKMIVFKPYQASQHDMCRFHSEDYIDFLQRVSPNNMQGFTKSLNAFNVGDDCPVFPGLFEFCSRYTGASLQGATQLNNKICDIAINWAGGLHHAKKFEASGFCYVNDIVIGILELLKYHPRVLYVDIDIHHGDGVQEAFYLTDRVMTVSFHKYGNYFFPGTGDMYEVGAESGRYYCLNVPLRDGIDDQSYRHLFQPVIKQVIDFYQPTCIVLQCGADSLGCDRLGCFNLSIRGHGECVQYVKSFNIPLLVLGGGGYTVRNVARCWTYETSLLVDETISEELPYSEYFEYFAPDFTLHPDVSTRIENQNSRQYLDQIRQTIFENLKMLNHAPSVQIHDVPSDILSYERTDEPDPEERGSEDNYSRPEASNEFYDGDHDNDKESDVEI.

The segment at 3–316 (KTVAYFYDPD…WTYETSLLVD (314 aa)) is histone deacetylase. The 1D-myo-inositol 1,4,5,6-tetrakisphosphate site is built by H17, G21, and K25. The active site involves H135. Residues D170, H172, and D259 each coordinate Zn(2+). R265 serves as a coordination point for 1D-myo-inositol 1,4,5,6-tetrakisphosphate. Composition is skewed to basic and acidic residues over residues 386–405 (SYER…DNYS) and 415–428 (DGDH…DVEI). The interval 386-428 (SYERTDEPDPEERGSEDNYSRPEASNEFYDGDHDNDKESDVEI) is disordered.

This sequence belongs to the histone deacetylase family. HD type 1 subfamily.

It is found in the nucleus. The protein resides in the chromosome. It localises to the cytoplasm. Its subcellular location is the cytosol. The catalysed reaction is N(6)-acetyl-L-lysyl-[histone] + H2O = L-lysyl-[histone] + acetate. It carries out the reaction N(6)-acetyl-L-lysyl-[protein] + H2O = L-lysyl-[protein] + acetate. It catalyses the reaction N(6)-(2E)-butenoyl-L-lysyl-[protein] + H2O = (2E)-2-butenoate + L-lysyl-[protein]. The enzyme catalyses N(6)-(2-hydroxyisobutanoyl)-L-lysyl-[protein] + H2O = 2-hydroxy-2-methylpropanoate + L-lysyl-[protein]. The catalysed reaction is N(6)-[(S)-lactoyl]-L-lysyl-[protein] + H2O = (S)-lactate + L-lysyl-[protein]. With respect to regulation, inositol tetraphosphate (1D-myo-inositol 1,4,5,6-tetrakisphosphate) promotes the histone deacetylase activity by acting as an intermolecular glue between hdac3 and N-Cor repressor complex components. Functionally, histone deacetylase that catalyzes the deacetylation of lysine residues on the N-terminal part of the core histones (H2A, H2B, H3 and H4), and some other non-histone substrates. Histone deacetylation gives a tag for epigenetic repression and plays an important role in transcriptional regulation, cell cycle progression and developmental events. Histone deacetylases act via the formation of large multiprotein complexes, such as N-Cor repressor complex, which activate the histone deacetylase activity. Participates in the BCL6 transcriptional repressor activity by deacetylating the H3 'Lys-27' (H3K27) on enhancer elements, antagonizing EP300 acetyltransferase activity and repressing proximal gene expression. Also functions as a deacetylase for non-histone targets. In addition to protein deacetylase activity, also acts as a protein-lysine deacylase by recognizing other acyl groups: catalyzes removal of (2E)-butenoyl (crotonyl), lactoyl (lactyl) and 2-hydroxyisobutanoyl (2-hydroxyisobutyryl) acyl groups from lysine residues, leading to protein decrotonylation, delactylation and de-2-hydroxyisobutyrylation, respectively. In Xenopus tropicalis (Western clawed frog), this protein is Histone deacetylase 3 (hdac3).